The sequence spans 692 residues: A-kinase anchor protein 8 (692 aa).

The interval Met-1 to Phe-195 is interaction with MCM2. The interval Met-1–Phe-210 is interaction with DPY30. Arg-109 is subject to Asymmetric dimethylarginine; alternate. Arg-109 carries the post-translational modification Omega-N-methylarginine; alternate. The segment at Arg-109–Pro-201 is interaction with DDX5. Residue Ser-112 is modified to Phosphoserine. Disordered stretches follow at residues Gly-168–Thr-203, Gly-231–Pro-254, and Ser-269–Asp-382. The segment covering Glu-172–Ser-182 has biased composition (basic and acidic residues). Ser-199 is modified (phosphoserine). Residues Arg-233 and Arg-277 each carry the omega-N-methylarginine modification. Basic and acidic residues-rich tracts occupy residues Arg-281–Gly-297 and Pro-314–Ser-323. The Bipartite nuclear localization signal motif lies at Lys-289–Lys-306. Lys-317 is covalently cross-linked (Glycyl lysine isopeptide (Lys-Gly) (interchain with G-Cter in SUMO2)). Residues Ser-323, Ser-328, and Ser-339 each carry the phosphoserine modification. Over residues Glu-324 to Ala-334 the composition is skewed to acidic residues. Positions Arg-387–Glu-450 are involved in chromatin-binding. C2H2 AKAP95-type zinc fingers lie at residues Cys-392–His-414 and Cys-481–His-504. Residues Ser-525–Thr-569 are involved in condensin complex recruitment. The interval Pro-545–Glu-571 is disordered. Acidic residues predominate over residues Val-551–Gly-562. A Glycyl lysine isopeptide (Lys-Gly) (interchain with G-Cter in SUMO2) cross-link involves residue Lys-567. Residues Glu-572–Val-589 form an RII-binding region. Residues Asp-576 to Gly-593 are required for interaction with MYCBP. The disordered stretch occupies residues Glu-592–Glu-692. Positions Ala-634–Ala-646 are enriched in basic and acidic residues. Ser-662 is subject to Phosphoserine. Residues Ala-663–Asp-675 are compositionally biased toward low complexity. The span at Ala-683 to Glu-692 shows a compositional bias: basic and acidic residues. Ser-685 carries the phosphoserine modification.

This sequence belongs to the AKAP95 family. In terms of assembly, binds to the PKA RII-alpha regulatory subunit PRKAR2A (phosphorylated at 'Thr-54') during mitosis. Interacts (via C-terminus) with FIGN. Interacts with NCAPD2, CCND1, MCM2, RPS6KA1, PDE4A. Interacts with CCND3, CCNE1, DDX5, CASP3. Interacts with NFKB1; detetcted in the cytoplasm. Interacts with MYCBP; MYCBP is translocated to the nucleus and the interaction prevents the association of the PKA catalytic subunit leading to suppression of PKA activity. Interacts with DPY30; mediating AKAP8 association with at least the MLL4/WBP7 HMT complex. Interacts with HDAC3; increased during mitosis. Interacts with GJA1; in the nucleus and in the nuclear membrane; the nuclear association increases with progress of cell cycle G1, S and G2 phase and decreases in M phase. Post-translationally, phosphorylated on tyrosine residues probably by SRC subfamily protein kinases; multiple phosphorylation is leading to dissociation from nuclear structures implicated in chromatin structural changes. In terms of tissue distribution, highly expressed in heart, liver, skeletal muscle, kidney and pancreas. Expressed in mature dendritic cells.

It localises to the nucleus. The protein localises to the nucleus matrix. Its subcellular location is the nucleolus. It is found in the cytoplasm. In terms of biological role, anchoring protein that mediates the subcellular compartmentation of cAMP-dependent protein kinase (PKA type II). Acts as an anchor for a PKA-signaling complex onto mitotic chromosomes, which is required for maintenance of chromosomes in a condensed form throughout mitosis. Recruits condensin complex subunit NCAPD2 to chromosomes required for chromatin condensation; the function appears to be independent from PKA-anchoring. May help to deliver cyclin D/E to CDK4 to facilitate cell cycle progression. Required for cell cycle G2/M transition and histone deacetylation during mitosis. In mitotic cells recruits HDAC3 to the vicinity of chromatin leading to deacetylation and subsequent phosphorylation at 'Ser-10' of histone H3; in this function may act redundantly with AKAP8L. Involved in nuclear retention of RPS6KA1 upon ERK activation thus inducing cell proliferation. May be involved in regulation of DNA replication by acting as scaffold for MCM2. Enhances HMT activity of the KMT2 family MLL4/WBP7 complex and is involved in transcriptional regulation. In a teratocarcinoma cell line is involved in retinoic acid-mediated induction of developmental genes implicating H3 'Lys-4' methylation. May be involved in recruitment of active CASP3 to the nucleus in apoptotic cells. May act as a carrier protein of GJA1 for its transport to the nucleus. May play a repressive role in the regulation of rDNA transcription. Preferentially binds GC-rich DNA in vitro. In cells, associates with ribosomal RNA (rRNA) chromatin, preferentially with rRNA promoter and transcribed regions. Involved in modulation of Toll-like receptor signaling. Required for the cAMP-dependent suppression of TNF-alpha in early stages of LPS-induced macrophage activation; the function probably implicates targeting of PKA to NFKB1. The protein is A-kinase anchor protein 8 (AKAP8) of Homo sapiens (Human).